Consider the following 458-residue polypeptide: MTFRKSFDCYDFYDRAKVGEKCTQDDWDLMKIPMKAMELKQKYGLDFKGEFIPTDKDMMEKLFKAGFEMLLECGIYCTDTHRIVKYTEDEIWDAINNVQKEFVLGTGRDAVNVRKRSVGDKAKPIVQGGPTGSPISEDVFMPVHMSYALEKEVDTIVNGVMTSVRGKSPIPKSPYEVLAAKTETRLIKNACAMAGRPGMGVOGPETSLSAQGNISADCTGGMTCTDSHEVSQLNELKIDLDAISVIAHYKGNSDIIMDEQMPIFGGYAGGIEETTIVDVATHINAVLMSSASWHLDGPVHIRWGSTNTRETLMIAGWACATISEFTDILSGNQYYPCAGPCTEMCLLEASAQSITDTASGREILSGVASAKGVVTDKTTGMEARMMGEVARATAGVEISEVNVILDKLVSLYEKNYASAPAGKTFQECYDVKTVTPTEEYMQVYDGARKKLEDLGLVF.

Residue Pyl-202 is a non-standard amino acid, pyrrolysine.

It belongs to the monomethylamine methyltransferase family. As to quaternary structure, dimer of homotrimers. Can form a complex with MtmC (MtmC1 or MtmC2).

It catalyses the reaction Co(I)-[methylamine-specific corrinoid protein] + methylamine + H(+) = methyl-Co(III)-[methylamine-specific corrinoid protein] + NH4(+). It functions in the pathway one-carbon metabolism; methanogenesis from methylamine. Its function is as follows. Catalyzes the transfer of the methyl group from monomethylamine to the corrinoid cofactor of MtmC (MtmC1 or MtmC2). The polypeptide is Monomethylamine methyltransferase MtmB1 (mtmB1) (Methanosarcina barkeri).